A 124-amino-acid polypeptide reads, in one-letter code: Large ribosomal subunit protein uL18 (124 aa).

The protein belongs to the universal ribosomal protein uL18 family. As to quaternary structure, part of the 50S ribosomal subunit; part of the 5S rRNA/L5/L18/L25 subcomplex. Contacts the 5S and 23S rRNAs.

Functionally, this is one of the proteins that bind and probably mediate the attachment of the 5S RNA into the large ribosomal subunit, where it forms part of the central protuberance. The polypeptide is Large ribosomal subunit protein uL18 (Orientia tsutsugamushi (strain Boryong) (Rickettsia tsutsugamushi)).